The chain runs to 189 residues: Nucleoside triphosphate pyrophosphatase (189 aa).

The active-site Proton acceptor is the aspartate 70.

This sequence belongs to the Maf family. It depends on a divalent metal cation as a cofactor.

It is found in the cytoplasm. The catalysed reaction is a ribonucleoside 5'-triphosphate + H2O = a ribonucleoside 5'-phosphate + diphosphate + H(+). It carries out the reaction a 2'-deoxyribonucleoside 5'-triphosphate + H2O = a 2'-deoxyribonucleoside 5'-phosphate + diphosphate + H(+). In terms of biological role, nucleoside triphosphate pyrophosphatase. May have a dual role in cell division arrest and in preventing the incorporation of modified nucleotides into cellular nucleic acids. The chain is Nucleoside triphosphate pyrophosphatase from Xylella fastidiosa (strain 9a5c).